Consider the following 181-residue polypeptide: Large ribosomal subunit protein uL10 (181 aa).

Belongs to the universal ribosomal protein uL10 family. Part of the ribosomal stalk of the 50S ribosomal subunit. The N-terminus interacts with L11 and the large rRNA to form the base of the stalk. The C-terminus forms an elongated spine to which L12 dimers bind in a sequential fashion forming a multimeric L10(L12)X complex.

In terms of biological role, forms part of the ribosomal stalk, playing a central role in the interaction of the ribosome with GTP-bound translation factors. This Protochlamydia amoebophila (strain UWE25) protein is Large ribosomal subunit protein uL10.